The primary structure comprises 586 residues: CTP synthase (586 aa).

An amidoligase domain region spans residues 1-278 (MRKHPQTATK…DAFVVRRLNL (278 aa)). Ser-20 contacts CTP. Residue Ser-20 coordinates UTP. ATP contacts are provided by residues 21–26 (SLGKGL) and Asp-78. Mg(2+) is bound by residues Asp-78 and Glu-152. Residues 159-161 (DIE), 199-204 (KTKPTQ), and Lys-235 each bind CTP. UTP is bound by residues 199–204 (KTKPTQ) and Lys-235. The 249-residue stretch at 303–551 (RIALVGKYVE…VGAAIDYKAG (249 aa)) folds into the Glutamine amidotransferase type-1 domain. L-glutamine is bound at residue Gly-366. The active-site Nucleophile; for glutamine hydrolysis is Cys-393. L-glutamine is bound by residues 394–397 (LGLQ), Glu-416, and Arg-477. Residues His-524 and Glu-526 contribute to the active site. The interval 560-586 (EIPEHTPNGSSHRDGVGQPLPEPASRG) is disordered.

The protein belongs to the CTP synthase family. Homotetramer.

It carries out the reaction UTP + L-glutamine + ATP + H2O = CTP + L-glutamate + ADP + phosphate + 2 H(+). The catalysed reaction is L-glutamine + H2O = L-glutamate + NH4(+). It catalyses the reaction UTP + NH4(+) + ATP = CTP + ADP + phosphate + 2 H(+). It functions in the pathway pyrimidine metabolism; CTP biosynthesis via de novo pathway; CTP from UDP: step 2/2. With respect to regulation, allosterically activated by GTP, when glutamine is the substrate; GTP has no effect on the reaction when ammonia is the substrate. The allosteric effector GTP functions by stabilizing the protein conformation that binds the tetrahedral intermediate(s) formed during glutamine hydrolysis. Inhibited by the product CTP, via allosteric rather than competitive inhibition. Functionally, catalyzes the ATP-dependent amination of UTP to CTP with either L-glutamine or ammonia as the source of nitrogen. Regulates intracellular CTP levels through interactions with the four ribonucleotide triphosphates. In Mycobacterium tuberculosis (strain CDC 1551 / Oshkosh), this protein is CTP synthase.